The following is a 121-amino-acid chain: Small ribosomal subunit protein bS16 (121 aa).

Over residues 97 to 114 (LAKAKTKDGDNDSSKAES) the composition is skewed to basic and acidic residues. Positions 97–121 (LAKAKTKDGDNDSSKAESESNEAET) are disordered.

The protein belongs to the bacterial ribosomal protein bS16 family.

The chain is Small ribosomal subunit protein bS16 from Prochlorococcus marinus (strain MIT 9301).